Consider the following 1748-residue polypeptide: Tight junction protein 1 (1748 aa).

The region spanning 23 to 110 (TVTLHRAPGF…NAKITIRRKK (88 aa)) is the PDZ 1 domain. Residues 102–112 (AKITIRRKKKV) are compositionally biased toward basic residues. A disordered region spans residues 102 to 189 (AKITIRRKKK…QPAKPTKVTL (88 aa)). Over residues 123-136 (PVSDNEEDSYDEEI) the composition is skewed to acidic residues. Position 125 is a phosphoserine (serine 125). A Phosphotyrosine modification is found at tyrosine 132. Basic and acidic residues predominate over residues 149-175 (RRSEKIWPRDRSASRERSLSPRSDRRS). Serine 175, serine 178, and serine 179 each carry phosphoserine. At threonine 185 the chain carries Phosphothreonine. A PDZ 2 domain is found at 186 to 264 (KVTLVKSRKN…KLKMVVQRDE (79 aa)). A phosphoserine mark is found at serine 212 and serine 241. Position 267 is a phosphothreonine (threonine 267). Phosphoserine is present on residues serine 275, serine 277, serine 280, serine 284, serine 290, serine 294, serine 297, serine 300, serine 323, serine 329, serine 334, serine 337, and serine 353. Residues 295–396 (LASDHSGRSH…PVYAQVGQPD (102 aa)) are disordered. Residues 299–327 (HSGRSHDRPPRRSRSRSPDQRSEPSDHSR) show a composition bias toward basic and acidic residues. Residues 329-338 (SPQQPSNGSL) show a composition bias toward polar residues. Phosphothreonine is present on threonine 354. Positions 357 to 377 (KHADDHTPKTVEEVTVERNEK) are enriched in basic and acidic residues. The PDZ 3 domain maps to 421–502 (SMKLVKFRKG…GEEVTILAQK (82 aa)). The SH3 domain maps to 516-584 (GDSFYIRTHF…PNKNRAEQLA (69 aa)). Residues 598-779 (RADFWRFRGL…TTTINLNSMN (182 aa)) enclose the Guanylate kinase-like domain. Phosphoserine is present on residues serine 617 and serine 622. The interval 633-876 (YERVVLREAG…GTPPESAITR (244 aa)) is occludin (OCLN)-binding region. The residue at position 809 (threonine 809) is a Phosphothreonine. A phosphoserine mark is found at serine 810 and serine 821. Tyrosine 822 bears the Phosphotyrosine mark. 3 positions are modified to phosphoserine: serine 824, serine 828, and serine 837. Disordered stretches follow at residues 825–1081 (APGS…LRYE) and 1095–1587 (DDKQ…PEFD). 5 positions are modified to phosphothreonine: threonine 846, threonine 848, threonine 854, threonine 861, and threonine 868. Basic and acidic residues predominate over residues 879 to 892 (EPVREDSSGMHHEN). Positions 893-906 (QTYPPYSPQAQPQP) are enriched in low complexity. Serine 912 carries the post-translational modification Phosphoserine. Composition is skewed to polar residues over residues 934-953 (PETN…NLTN) and 963-979 (PSTS…TPST). A Phosphoserine modification is found at serine 968. Positions 998-1014 (DPTKVYRKDPYPEEMMR) are enriched in basic and acidic residues. The span at 1061 to 1072 (YESSSYTDQFSR) shows a compositional bias: polar residues. 3 positions are modified to phosphoserine: serine 1071, serine 1111, and serine 1139. Basic and acidic residues predominate over residues 1110 to 1125 (HSQDLDSRQHPEESSE). Phosphotyrosine is present on residues tyrosine 1140 and tyrosine 1165. Residues 1151–1371 (RASALRHEEQ…FDRRSFENKP (221 aa)) are actin-binding region (ABR). 2 stretches are compositionally biased toward basic and acidic residues: residues 1269-1286 (KMFE…KDVN) and 1336-1347 (PPEDIVRSNHYD). At tyrosine 1354 the chain carries Phosphotyrosine. Serine 1366 carries the post-translational modification Phosphoserine. Over residues 1389-1400 (SQNQSNFSSYSS) the composition is skewed to low complexity. A compositionally biased stretch (basic and acidic residues) spans 1403-1420 (KPPEADGVDRSFGEKRYE). At serine 1413 the chain carries Phosphoserine. Polar residues-rich tracts occupy residues 1459-1470 (NSVSLDFQNSLV) and 1512-1522 (GTEQTQKTVTP). Residues 1538 to 1547 (PFERKFESPK) are compositionally biased toward basic and acidic residues. Serine 1545 and serine 1617 each carry phosphoserine. The 115-residue stretch at 1634–1748 (ATARGIFNSN…NCVSVLIDHF (115 aa)) folds into the ZU5 domain.

The protein belongs to the MAGUK family. Homodimer. Forms heterodimers TJP3. Forms a heterodimer (via PDZ2 domain) with TJP2/ZO2 (via PDZ2 domain). Interacts with OCLN, CALM, claudins, CGN/cingulin, CXADR, GJA12, GJD3 and UBN1. Interacts (via ZU5 domain) with CDC42BPB and MYZAP. Interacts (via PDZ domain) with GJA1. Interacts (via PDZ domains) with ANKRD2. Interacts with POPDC1 (via the C-terminus cytoplasmic tail). Interacts with HSPA4 and KIRREL1. Interacts with DLL1. Interacts with USP53 (via the C-terminal region). Interacts (via ABR region) with F-actin. Interacts with DNMBP (via C-terminal domain); required for the apical cell-cell junction localization of DNMBP. Interacts with SPEF1. Interacts (via N-terminus) with CTNNA1. Interacts with CLDN18. Interacts with CLDN16 (via TRV motif); this is a prerequisite for anchoring of CLDN16 at the tight junction. Interacts with PKP1; the interaction facilitates TJP1/ZO-1 localization to the plasma membrane. Interacts with PATJ (via PDZ1-6 domains); the interaction is required for attachment and extension of TJP1/ZO1 condensates along the apical cell interface. Phosphorylated at tyrosine redidues in response to epidermal growth factor (EGF). This response is dependent on an intact actin microfilament system. Dephosphorylated by PTPRJ. As to expression, the alpha-containing isoform is found in most epithelial cell junctions. The short isoform is found both in endothelial cells and the highly specialized epithelial junctions of renal glomeruli and Sertoli cells of the seminiferous tubules.

The protein resides in the cell membrane. It localises to the cell junction. Its subcellular location is the tight junction. The protein localises to the gap junction. It is found in the cell projection. The protein resides in the podosome. Functionally, TJP1, TJP2, and TJP3 are closely related scaffolding proteins that link tight junction (TJ) transmembrane proteins such as claudins, junctional adhesion molecules, and occludin to the actin cytoskeleton. Forms a multistranded TJP1/ZO1 condensate which elongates to form a tight junction belt, the belt is anchored at the apical cell membrane via interaction with PATJ. The tight junction acts to limit movement of substances through the paracellular space and as a boundary between the compositionally distinct apical and basolateral plasma membrane domains of epithelial and endothelial cells. Necessary for lumenogenesis, and particularly efficient epithelial polarization and barrier formation. Plays a role in the regulation of cell migration by targeting CDC42BPB to the leading edge of migrating cells. Plays an important role in podosome formation and associated function, thus regulating cell adhesion and matrix remodeling. With TJP2 and TJP3, participates in the junctional retention and stability of the transcription factor DBPA, but is not involved in its shuttling to the nucleus. May play a role in mediating cell morphology changes during ameloblast differentiation via its role in tight junctions. The polypeptide is Tight junction protein 1 (Homo sapiens (Human)).